We begin with the raw amino-acid sequence, 118 residues long: Non-specific lipid-transfer protein 1 (118 aa).

Positions 1-25 (MASLRVSCLVALMCMVVISAPMAEA) are cleaved as a signal peptide. Cystine bridges form between Cys-29-Cys-76, Cys-39-Cys-53, Cys-54-Cys-99, and Cys-74-Cys-113.

It belongs to the plant LTP family.

Plant non-specific lipid-transfer proteins transfer phospholipids as well as galactolipids across membranes. May play a role in wax or cutin deposition in the cell walls of expanding epidermal cells and certain secretory tissues. This chain is Non-specific lipid-transfer protein 1, found in Lens culinaris (Lentil).